The sequence spans 877 residues: Leucine--tRNA ligase (877 aa).

The 'HIGH' region motif lies at 43-53 (PYPSGRIHMGH). The 'KMSKS' region motif lies at 628-632 (KMSKS). Lys-631 serves as a coordination point for ATP.

It belongs to the class-I aminoacyl-tRNA synthetase family.

It is found in the cytoplasm. It carries out the reaction tRNA(Leu) + L-leucine + ATP = L-leucyl-tRNA(Leu) + AMP + diphosphate. The sequence is that of Leucine--tRNA ligase from Brucella melitensis biotype 2 (strain ATCC 23457).